Here is a 471-residue protein sequence, read N- to C-terminus: MYTYMEYLQKCFYKTTNWNEDNIFSNITATSSALLEFPIPNGCKVDLSSKATEHSASSFTLSNYHSINGSLAYLYSSIPLRNTMGTKDISLQDAISGFKMLELNSSTTNALQNPVYKNTHDSLLYGRMYFPGSALEAMIIKRISPQTQLLIKCINNPHLDKNGTMIVYLQKNAPKLSREFIYSTNEALFGFRCLYNMGSSESNLNRSINNSNLIPKFDNSVISIGTEIWYAALSMSPGLSTAFRYSTRSTSTGKPLTMTFACNPILGHISSAYTVKTSVASTFCSKYDFNVFSYASNLSLGFEIYNYSSSNTSNSAATPPRIKNSDSQVLSNNSTDSKGTVHIRSPDVLDYKNHSNVIISPIQTFDNYYHINPTLLPSTKNEFEEVRPPPLESQVDSNNETAMTAFENLVNESDFSSVIKLSTSLNDKMLKLLWKGRCKDFLVTTGVKMILNPITNTPEFNRFGISFSYAC.

The interval 313–338 (SNSAATPPRIKNSDSQVLSNNSTDSK) is disordered. Positions 325 to 338 (SDSQVLSNNSTDSK) are enriched in polar residues.

Belongs to the MDM10 family. Component of the ER-mitochondria encounter structure (ERMES) or MDM complex, composed of MMM1, MDM10, MDM12 and MDM34. Associates with the mitochondrial outer membrane sorting assembly machinery SAM(core) complex.

Its subcellular location is the mitochondrion outer membrane. Functionally, component of the ERMES/MDM complex, which serves as a molecular tether to connect the endoplasmic reticulum and mitochondria. Components of this complex are involved in the control of mitochondrial shape and protein biogenesis and may function in phospholipid exchange. MDM10 is involved in the late assembly steps of the general translocase of the mitochondrial outer membrane (TOM complex). Functions in the TOM40-specific route of the assembly of outer membrane beta-barrel proteins, including the association of TOM40 with the receptor TOM22 and small TOM proteins. Can associate with the SAM(core) complex as well as the MDM12-MMM1 complex, both involved in late steps of the major beta-barrel assembly pathway, that is responsible for biogenesis of all outer membrane beta-barrel proteins. May act as a switch that shuttles between both complexes and channels precursor proteins into the TOM40-specific pathway. Plays a role in mitochondrial morphology and in the inheritance of mitochondria. This chain is Mitochondrial distribution and morphology protein 10, found in Debaryomyces hansenii (strain ATCC 36239 / CBS 767 / BCRC 21394 / JCM 1990 / NBRC 0083 / IGC 2968) (Yeast).